Here is a 615-residue protein sequence, read N- to C-terminus: MATVEVATELGTVVTAVGPKAKDEEEEEEEEESLPPCETVRWAPVGAVAEAGPGAATFSEAAAAEEPGAAPGSPSDATVRTLRRLEAERRQLDSALLALSSHFAQVQFRLRQVVRGAPAEQQRLLRELEDFAFRGCPHVLGYEGLADPCGGDESDVLPGDRPRVRGEDQSEQEKRERLETQREKQKELILQLKTQLDDLETFAYQEGSYDSLPQSVVLERQRVIIDELIKKLDMNLNEDISSLSTEELRQRVDAAVAQIVNPVRVKEQLVEQLKTQIRDLEMFISFIQDEVGSPLQTGGHCECQASGKVGIGSTRVGGSTLPPGPGKAKAEDAKRARETGLHLMRRALAVLQIFTVSQLGCATGQIPQTLWQRSQADRDYSHLLKRLEVSVDRVKQLALRHQPHDHVITSANLQDLSLGGKDELTTVVRKELTVAVRDLLAHGLYASSSGMSLVMAPLACLLPVFSSAPETMHPWELFVKYYHAKNGRAYVESPARKLSQSFALPIMGDTAVTPKQSLLTAIHLVLTEHDPFKRSADSELKALVCMALNEQRLVSWVNLICKSGSLIEPHYQPWSYMAHTGFESALNLLSRLSSLKFSLPVDLAVRQLKNIKDAF.

Residues 15-41 form a disordered region; it reads TAVGPKAKDEEEEEEEEESLPPCETVR. Residues 24 to 33 are compositionally biased toward acidic residues; that stretch reads EEEEEEEEES. Residue S73 is modified to Phosphoserine. 2 coiled-coil regions span residues 76 to 102 and 163 to 238; these read DATV…LSSH and RVRG…NLNE. A disordered region spans residues 147–180; it reads DPCGGDESDVLPGDRPRVRGEDQSEQEKRERLET. Over residues 158 to 180 the composition is skewed to basic and acidic residues; that stretch reads PGDRPRVRGEDQSEQEKRERLET. Residues 423–604 form the RUN domain; sequence ELTTVVRKEL…LKFSLPVDLA (182 aa). S499 bears the Phosphoserine mark.

Its function is as follows. May play a role as p53/TP53 inhibitor and thus may have oncogenic activity. This Mus musculus (Mouse) protein is RUN domain-containing protein 1 (Rundc1).